Consider the following 861-residue polypeptide: DNA mismatch repair protein MutS (861 aa).

618–625 (GPNMGGKS) contacts ATP.

It belongs to the DNA mismatch repair MutS family.

Functionally, this protein is involved in the repair of mismatches in DNA. It is possible that it carries out the mismatch recognition step. This protein has a weak ATPase activity. In Shewanella sp. (strain MR-4), this protein is DNA mismatch repair protein MutS.